Consider the following 183-residue polypeptide: Large ribosomal subunit protein uL18 (183 aa).

The protein belongs to the universal ribosomal protein uL18 family. As to quaternary structure, part of the 50S ribosomal subunit. Contacts the 5S and 23S rRNAs.

This is one of the proteins that bind and probably mediate the attachment of the 5S RNA into the large ribosomal subunit, where it forms part of the central protuberance. The protein is Large ribosomal subunit protein uL18 of Halobacterium salinarum (strain ATCC 29341 / DSM 671 / R1).